A 775-amino-acid polypeptide reads, in one-letter code: Chondroitin sulfate synthase 2 (775 aa).

The Cytoplasmic portion of the chain corresponds to 1–15; that stretch reads MRASLLLSVLRPAGP. A helical; Signal-anchor for type II membrane protein transmembrane segment spans residues 16-34; that stretch reads VAVGISLGFTLSLLSVTWV. The Lumenal segment spans residues 35–775; sequence EEPCGPGPPQ…LFEQEQGNST (741 aa). The tract at residues 37–100 is disordered; that stretch reads PCGPGPPQPG…YHPAQPGQAA (64 aa). The span at 54-66 shows a compositional bias: polar residues; that stretch reads GNTNAARRPNSVQ. Asn-138 and Asn-361 each carry an N-linked (GlcNAc...) asparagine glycan. Residue Asp-617 coordinates a divalent metal cation.

It belongs to the chondroitin N-acetylgalactosaminyltransferase family. In terms of assembly, interacts with PRKN. Mn(2+) serves as cofactor. Requires Co(2+) as cofactor. As to expression, ubiquitous. Highly expressed in pancreas, ovary, brain, heart, skeletal muscle, colon, kidney, liver, stomach, spleen and placenta. In terms of tissue distribution, expressed in brain, spleen, ovary, testis, lung and peripheral mononuclear cells. Also ubiquitous.

The protein resides in the golgi apparatus. It localises to the golgi stack membrane. It is found in the cytoplasm. The protein localises to the cytosol. Its subcellular location is the mitochondrion. The protein resides in the mitochondrion matrix. The enzyme catalyses 3-O-(beta-D-GlcA-(1-&gt;3)-beta-D-GalNAc-(1-&gt;4)-beta-D-GlcA-(1-&gt;3)-beta-D-Gal-(1-&gt;3)-beta-D-Gal-(1-&gt;4)-beta-D-Xyl)-L-seryl-[protein] + UDP-N-acetyl-alpha-D-galactosamine = 3-O-(beta-D-GalNAc-(1-&gt;4)-beta-D-GlcA-(1-&gt;3)-beta-D-GalNAc-(1-&gt;4)-beta-D-GlcA-(1-&gt;3)-beta-D-Gal-(1-&gt;3)-beta-D-Gal-(1-&gt;4)-beta-D-Xyl)-L-seryl-[protein] + UDP + H(+). The catalysed reaction is 3-O-{beta-D-GlcA-(1-&gt;3)-[beta-D-GalNAc-(1-&gt;4)-beta-D-GlcA-(1-&gt;3)](n)-beta-D-GalNAc-(1-&gt;4)-beta-D-GlcA-(1-&gt;3)-beta-D-Gal-(1-&gt;3)-beta-D-Gal-(1-&gt;4)-beta-D-Xyl}-L-seryl-[protein] + UDP-N-acetyl-alpha-D-galactosamine = 3-O-{[beta-D-GalNAc-(1-&gt;4)-beta-D-GlcA-(1-&gt;3)](n+1)-beta-D-GalNAc-(1-&gt;4)-beta-D-GlcA-(1-&gt;3)-beta-D-Gal-(1-&gt;3)-beta-D-Gal-(1-&gt;4)-beta-D-Xyl}-L-seryl-[protein] + UDP + H(+). It carries out the reaction 3-O-(beta-D-GalNAc-(1-&gt;4)-beta-D-GlcA-(1-&gt;3)-beta-D-Gal-(1-&gt;3)-beta-D-Gal-(1-&gt;4)-beta-D-Xyl)-L-seryl-[protein] + UDP-alpha-D-glucuronate = 3-O-(beta-D-GlcA-(1-&gt;3)-beta-D-GalNAc-(1-&gt;4)-beta-D-GlcA-(1-&gt;3)-beta-D-Gal-(1-&gt;3)-beta-D-Gal-(1-&gt;4)-beta-D-Xyl)-L-seryl-[protein] + UDP + H(+). It catalyses the reaction 3-O-{[beta-D-GalNAc-(1-&gt;4)-beta-D-GlcA-(1-&gt;3)](n)-beta-D-GalNAc-(1-&gt;4)-beta-D-GlcA-(1-&gt;3)-beta-D-Gal-(1-&gt;3)-beta-D-Gal-(1-&gt;4)-beta-D-Xyl}-L-seryl-[protein] + UDP-alpha-D-glucuronate = 3-O-{beta-D-GlcA-(1-&gt;3)-[beta-D-GalNAc-(1-&gt;4)-beta-D-GlcA-(1-&gt;3)](n)-beta-D-GalNAc-(1-&gt;4)-beta-D-GlcA-(1-&gt;3)-beta-D-Gal-(1-&gt;3)-beta-D-Gal-(1-&gt;4)-beta-D-Xyl}-L-seryl-[protein] + UDP + H(+). Has both beta-1,3-glucuronic acid and beta-1,4-N-acetylgalactosamine transferase activity. Transfers glucuronic acid (GlcUA) from UDP-GlcUA and N-acetylgalactosamine (GalNAc) from UDP-GalNAc to the non-reducing end of the elongating chondroitin polymer. Seems to act as a specific activating factor for CHSY1 in chondroitin polymerization. In terms of biological role, may facilitate PRKN transport into the mitochondria. In collaboration with PRKN, may enhance cell viability and protect cells from oxidative stress. This chain is Chondroitin sulfate synthase 2, found in Homo sapiens (Human).